Consider the following 299-residue polypeptide: Small ribosomal subunit protein uS2 (299 aa).

A compositionally biased stretch (low complexity) spans 259–291; that stretch reads AAASAAGPTSWEADGADWAASSAPAAAGESWAE. The segment at 259–299 is disordered; the sequence is AAASAAGPTSWEADGADWAASSAPAAAGESWAETQPAEGKW.

Belongs to the universal ribosomal protein uS2 family. Component of the small ribosomal subunit. Mature ribosomes consist of a small (40S) and a large (60S) subunit. The 40S subunit contains about 33 different proteins and 1 molecule of RNA (18S). The 60S subunit contains about 49 different proteins and 3 molecules of RNA (25S, 5.8S and 5S). Interacts with rps21.

The protein localises to the cytoplasm. Its function is as follows. Required for the assembly and/or stability of the 40S ribosomal subunit. Required for the processing of the 20S rRNA-precursor to mature 18S rRNA in a late step of the maturation of 40S ribosomal subunits. In Aspergillus flavus (strain ATCC 200026 / FGSC A1120 / IAM 13836 / NRRL 3357 / JCM 12722 / SRRC 167), this protein is Small ribosomal subunit protein uS2 (rps0).